Here is a 1741-residue protein sequence, read N- to C-terminus: S-layer protein (1741 aa).

Residues 894-904 (SFTSDSANGSG) show a composition bias toward polar residues. A disordered region spans residues 894 to 913 (SFTSDSANGSGHSVEGGTGD).

Glycosylated.

Its subcellular location is the secreted. The protein localises to the cell wall. The protein resides in the S-layer. Functionally, S-layer protein. The S-layer is a paracrystalline mono-layered assembly of proteins which coats the surface of bacteria. Under laboratory conditions, has a supportive but not a critical role in the function of the cyanobacterium. Shows no apparent hemolytic activity against sheep erythrocytes, however, a slight hemolytic activity is detected during the conformational change caused by the rebinding of Ca(2+). The protein is S-layer protein of Synechocystis sp. (strain ATCC 27184 / PCC 6803 / Kazusa).